The sequence spans 113 residues: Histone H3-8 (113 aa).

A compositionally biased stretch (basic residues) spans 1 to 17 (NTGAKAPRKHLANKAAR). Residues 1–31 (NTGAKAPRKHLANKAARKTAAPANAGIKKPH) are disordered.

The protein belongs to the histone H3 family. The nucleosome is a histone octamer containing two molecules each of H2A, H2B, H3 and H4 assembled in one H3-H4 heterotetramer and two H2A-H2B heterodimers. The octamer wraps approximately 147 bp of DNA.

Its subcellular location is the nucleus. It localises to the chromosome. Functionally, core component of nucleosome. Nucleosomes wrap and compact DNA into chromatin, limiting DNA accessibility to the cellular machineries which require DNA as a template. Histones thereby play a central role in transcription regulation, DNA repair, DNA replication and chromosomal stability. DNA accessibility is regulated via a complex set of post-translational modifications of histones, also called histone code, and nucleosome remodeling. This is Histone H3-8 (H3-8) from Stylonychia lemnae (Ciliate).